Reading from the N-terminus, the 200-residue chain is Peroxiredoxin (200 aa).

A Thioredoxin domain is found at 6 to 166 (ARIGHLAPGF…ILRLVQAFQF (161 aa)). Cys-52 (cysteine sulfenic acid (-SOH) intermediate) is an active-site residue.

It belongs to the peroxiredoxin family. AhpC/Prx1 subfamily. Homodimer; disulfide-linked, upon oxidation.

It catalyses the reaction a hydroperoxide + [thioredoxin]-dithiol = an alcohol + [thioredoxin]-disulfide + H2O. Functionally, thiol-specific peroxidase that catalyzes the reduction of hydrogen peroxide and organic hydroperoxides to water and alcohols, respectively. Plays a role in cell protection against oxidative stress by detoxifying peroxides and as sensor of hydrogen peroxide-mediated signaling events. The sequence is that of Peroxiredoxin from Oncorhynchus mykiss (Rainbow trout).